A 66-amino-acid chain; its full sequence is uncharacterized protein (66 aa).

Residues proline 11–leucine 31 traverse the membrane as a helical segment.

The protein resides in the membrane. This is an uncharacterized protein from Chenopodium amaranticolor (Quinoa).